The primary structure comprises 438 residues: Adenosylhomocysteinase (438 aa).

Thr64, Asp139, and Glu164 together coordinate substrate. Residue 165 to 167 (TTT) coordinates NAD(+). Substrate contacts are provided by Lys194 and Asp198. Residues Asn199, 228 to 233 (GYGDVG), Glu251, Asn286, 307 to 309 (IGH), and Asn352 contribute to the NAD(+) site.

Belongs to the adenosylhomocysteinase family. NAD(+) serves as cofactor.

The protein localises to the cytoplasm. It carries out the reaction S-adenosyl-L-homocysteine + H2O = L-homocysteine + adenosine. Its pathway is amino-acid biosynthesis; L-homocysteine biosynthesis; L-homocysteine from S-adenosyl-L-homocysteine: step 1/1. In terms of biological role, may play a key role in the regulation of the intracellular concentration of adenosylhomocysteine. This Coxiella burnetii (strain RSA 493 / Nine Mile phase I) protein is Adenosylhomocysteinase.